We begin with the raw amino-acid sequence, 364 residues long: Mannose-1-phosphate guanylyltransferase catalytic subunit beta (364 aa).

The interval 2–220 is substrate-binding domain; sequence KALILVGGYG…PGFWMDVGQP (219 aa). Asp109 is a binding site for GDP-alpha-D-mannose. Asp109 serves as a coordination point for Mg(2+). Lys160 is a catalytic residue. Residue Asp216 coordinates GDP-alpha-D-mannose. Asp216 contributes to the Mg(2+) binding site. Residues 243–364 are hexapeptide repeat domain; sequence ATGSNIHGTA…VNVPSKDIIM (122 aa).

Belongs to the transferase hexapeptide repeat family. As to quaternary structure, component of the GMPPA-GMPPB mannose-1-phosphate guanylyltransferase complex composed of 4 GMPPA subunits and 8 tag-335/GMPPB subunits; the complex is organized into three layers, a central layer made up of 2 GMPPA dimers sandwiched between two layers each made up of 2 tag-335/GMPPB dimers. Catalytic activity of tag-335/GMPPB is reduced when part of the complex and binding of GDP-alpha-D-Mannose by GMPPA induces allosteric feedback inhibition of tag-335/GMPPB. Mg(2+) serves as cofactor.

The catalysed reaction is alpha-D-mannose 1-phosphate + GTP + H(+) = GDP-alpha-D-mannose + diphosphate. Its pathway is nucleotide-sugar biosynthesis; GDP-alpha-D-mannose biosynthesis; GDP-alpha-D-mannose from alpha-D-mannose 1-phosphate (GTP route): step 1/1. With respect to regulation, enzyme activity is reduced by incorporation into the GMPPA-GMPPB mannose-1-phosphate guanylyltransferase complex. Allosterically inhibited, when part of the GMPPA-GMPPB complex, by GDP-alpha-D-mannose binding to GMPPA. Catalytic subunit of the GMPPA-GMPPB mannose-1-phosphate guanylyltransferase complex. Catalyzes the formation of GDP-mannose, an essential precursor of glycan moieties of glycoproteins and glycolipids. Can catalyze the reverse reaction in vitro. Together with GMPPA regulates GDP-alpha-D-mannose levels. This Caenorhabditis briggsae protein is Mannose-1-phosphate guanylyltransferase catalytic subunit beta.